We begin with the raw amino-acid sequence, 189 residues long: Chitin synthase 1 (189 aa).

The protein belongs to the chitin synthase family. Class I subfamily.

The protein resides in the cell membrane. The enzyme catalyses [(1-&gt;4)-N-acetyl-beta-D-glucosaminyl](n) + UDP-N-acetyl-alpha-D-glucosamine = [(1-&gt;4)-N-acetyl-beta-D-glucosaminyl](n+1) + UDP + H(+). Polymerizes chitin, a structural polymer of the cell wall and septum, by transferring the sugar moiety of UDP-GlcNAc to the non-reducing end of the growing chitin polymer. In Rhinocladiella atrovirens, this protein is Chitin synthase 1 (CHS1).